A 576-amino-acid chain; its full sequence is Glutamine-dependent NAD(+) synthetase (576 aa).

The CN hydrolase domain maps to 4–246 (LRVTLAQLNP…EEIITVDLDL (243 aa)). The active-site Proton acceptor; for glutaminase activity is the Glu44. Lys112 acts as the For glutaminase activity in catalysis. Tyr118 contacts L-glutamine. Cys148 (nucleophile; for glutaminase activity) is an active-site residue. The L-glutamine site is built by Ser176 and Lys182. A ligase region spans residues 292-576 (PVREEEMFRA…PITNRFKEPL (285 aa)). 321 to 328 (GLSGGMDS) is an ATP binding site. Deamido-NAD(+) is bound at residue Asn404. Thr428 contributes to the ATP binding site. Residues Glu433 and Lys545 each contribute to the deamido-NAD(+) site.

It in the C-terminal section; belongs to the NAD synthetase family.

It carries out the reaction deamido-NAD(+) + L-glutamine + ATP + H2O = L-glutamate + AMP + diphosphate + NAD(+) + H(+). The protein operates within cofactor biosynthesis; NAD(+) biosynthesis; NAD(+) from deamido-NAD(+) (L-Gln route): step 1/1. Functionally, catalyzes the ATP-dependent amidation of deamido-NAD to form NAD. Uses L-glutamine as a nitrogen source. In Thermotoga maritima (strain ATCC 43589 / DSM 3109 / JCM 10099 / NBRC 100826 / MSB8), this protein is Glutamine-dependent NAD(+) synthetase (nadE2).